Consider the following 544-residue polypeptide: Chaperonin GroEL (544 aa).

Residues 30–33 (TLGP), K51, 87–91 (DGTTT), G415, 481–483 (DAL), and D497 each bind ATP.

The protein belongs to the chaperonin (HSP60) family. Forms a cylinder of 14 subunits composed of two heptameric rings stacked back-to-back. Interacts with the co-chaperonin GroES.

It is found in the cytoplasm. The catalysed reaction is ATP + H2O + a folded polypeptide = ADP + phosphate + an unfolded polypeptide.. Functionally, together with its co-chaperonin GroES, plays an essential role in assisting protein folding. The GroEL-GroES system forms a nano-cage that allows encapsulation of the non-native substrate proteins and provides a physical environment optimized to promote and accelerate protein folding. The sequence is that of Chaperonin GroEL from Chlamydia trachomatis serovar A (strain ATCC VR-571B / DSM 19440 / HAR-13).